We begin with the raw amino-acid sequence, 710 residues long: Polyribonucleotide nucleotidyltransferase (710 aa).

Residues D489 and D495 each contribute to the Mg(2+) site. One can recognise a KH domain in the interval 556-615 (PKIDTIKIDVDKIKVVIGKGGETIDKIIAETGVKIDIDDEGNVSIYSSDQAAIDRTKEII). In terms of domain architecture, S1 motif spans 625 to 693 (GEVYHAKVVR…EKGRVDASMK (69 aa)). Residues 691–710 (SMKALIPRPPKPEKKEEKHD) form a disordered region. Positions 700-710 (PKPEKKEEKHD) are enriched in basic and acidic residues.

Belongs to the polyribonucleotide nucleotidyltransferase family. Requires Mg(2+) as cofactor.

Its subcellular location is the cytoplasm. The catalysed reaction is RNA(n+1) + phosphate = RNA(n) + a ribonucleoside 5'-diphosphate. Involved in mRNA degradation. Catalyzes the phosphorolysis of single-stranded polyribonucleotides processively in the 3'- to 5'-direction. The polypeptide is Polyribonucleotide nucleotidyltransferase (Streptococcus pyogenes serotype M49 (strain NZ131)).